We begin with the raw amino-acid sequence, 1072 residues long: MPKRLDINTILVIGSGPIVIGQAAEFDYSGTQACQSLKEEGYKVILVNSNPATIMTDTATADKVYIEPLTLEFVSRIIRKERPDAILPTLGGQTGLNMAVELAKSGVLEECGVEILGTKLSAIEQAEDRDLFRTLMQELNEPTPPSEIIHNLDEAYGFVNEIGYPVIVRPAFTLGGTGGGICHNEEELIEIVTSGLKHSPVTQCLLEKSIAGCKEIEYEVMRDSNDNAIVVCNMENIDPVGVHTGDSIVVAPSQTLSDREYQMLRNTSLRIIRALGIEGGCNVQLALDPYSFQYYVIEVNPRVSRSSALASKATGYPIAKLAAKIAVGLTLDEIVNPVTQKTYACFEPALDYVVSKIPRWPFDKFESANRTLGTQMKATGEVMSIGRNLEESLLKAVRSLELGIYHLELDHLKELDKETMKKRIIKADDERLFIVAEAIRQGVTKEEINEWCEMDFFFLQKVENIVNMEREVKANVGNMEVLQTAKEMGFSDHYIAAAWNKTEREIYDMRKGNNMTPVFKMVDTCAAEFESATPYYYSTYADENESIVTDRKSVVVLGSGPIRIGQGVEFDYATVHSVWAIKEAGYEAIIINNNPETVSTDFSISDKLYFEPLTIEDVMHIIDLEKPEGVIVQFGGQTAINLAAKLEEHGVKILGTSLEDLDRAEDRDKFEAALTKLGIPQPVGKTATTVEQAVAIAEEIGYPVLVRPSYVLGGRAMEIVYRQEELLHYMKNAVKVHADHPVLIDRYMVGKEIEVDAISDGENVFIPGIMEHIERAGVHSGDSIGVYPPQSLSEKLKEQIIEHTIALGKGLNIVGLLNIQFVVFKDQVYVIEVNPRASRTVPFLSKITGVPMANVATKVILGQDLVEQGYGTGYHPEEKEVYVKAPVFSFAKLRSVDTTLGPEMKSTGEVMGKDLTLEKALYKGLVASGINIPTHGSVIITVADKDKEEAMEIAKRFHEIGYNLLATAGTAQSLAEQNIPVQVVNKIDSEDYNLLDIIRQGKAQFVINTLTKGKQPARDGFRIRRESVENGVACLTSLDTTRAILRVLESMTFSAHSMKEITQTKRHEVVHA.

A carboxyphosphate synthetic domain region spans residues 1-401; the sequence is MPKRLDINTI…SLLKAVRSLE (401 aa). ATP-binding residues include arginine 129, arginine 169, glycine 175, glycine 176, lysine 208, isoleucine 210, glutamate 215, glycine 241, valine 242, histidine 243, glutamine 284, and glutamate 298. The ATP-grasp 1 domain maps to 133 to 327; that stretch reads RTLMQELNEP…IAKLAAKIAV (195 aa). Positions 284, 298, and 300 each coordinate Mg(2+). Mn(2+) contacts are provided by glutamine 284, glutamate 298, and asparagine 300. Positions 402–546 are oligomerization domain; the sequence is LGIYHLELDH…YSTYADENES (145 aa). Residues 547-929 are carbamoyl phosphate synthetic domain; it reads IVTDRKSVVV…ALYKGLVASG (383 aa). The 191-residue stretch at 671 to 861 folds into the ATP-grasp 2 domain; the sequence is EAALTKLGIP…MANVATKVIL (191 aa). ATP-binding residues include arginine 707, arginine 746, glutamate 752, glycine 777, valine 778, histidine 779, serine 780, glutamine 820, and glutamate 832. Glutamine 820, glutamate 832, and asparagine 834 together coordinate Mg(2+). Residues glutamine 820, glutamate 832, and asparagine 834 each coordinate Mn(2+). An MGS-like domain is found at 930–1072; the sequence is INIPTHGSVI…QTKRHEVVHA (143 aa). Residues 930-1072 are allosteric domain; the sequence is INIPTHGSVI…QTKRHEVVHA (143 aa).

Belongs to the CarB family. In terms of assembly, composed of two chains; the small (or glutamine) chain promotes the hydrolysis of glutamine to ammonia, which is used by the large (or ammonia) chain to synthesize carbamoyl phosphate. Tetramer of heterodimers (alpha,beta)4. The cofactor is Mg(2+). Requires Mn(2+) as cofactor.

The catalysed reaction is hydrogencarbonate + L-glutamine + 2 ATP + H2O = carbamoyl phosphate + L-glutamate + 2 ADP + phosphate + 2 H(+). It carries out the reaction hydrogencarbonate + NH4(+) + 2 ATP = carbamoyl phosphate + 2 ADP + phosphate + 2 H(+). It participates in amino-acid biosynthesis; L-arginine biosynthesis; carbamoyl phosphate from bicarbonate: step 1/1. Its pathway is pyrimidine metabolism; UMP biosynthesis via de novo pathway; (S)-dihydroorotate from bicarbonate: step 1/3. In terms of biological role, large subunit of the glutamine-dependent carbamoyl phosphate synthetase (CPSase). CPSase catalyzes the formation of carbamoyl phosphate from the ammonia moiety of glutamine, carbonate, and phosphate donated by ATP, constituting the first step of 2 biosynthetic pathways, one leading to arginine and/or urea and the other to pyrimidine nucleotides. The large subunit (synthetase) binds the substrates ammonia (free or transferred from glutamine from the small subunit), hydrogencarbonate and ATP and carries out an ATP-coupled ligase reaction, activating hydrogencarbonate by forming carboxy phosphate which reacts with ammonia to form carbamoyl phosphate. In Bacillus thuringiensis (strain Al Hakam), this protein is Carbamoyl phosphate synthase large chain.